We begin with the raw amino-acid sequence, 82 residues long: ATP synthase subunit c, chloroplastic (82 aa).

Transmembrane regions (helical) follow at residues 3–23 (PIVA…AAIG) and 57–77 (FAFM…LLFA).

Belongs to the ATPase C chain family. As to quaternary structure, F-type ATPases have 2 components, F(1) - the catalytic core - and F(0) - the membrane proton channel. F(1) has five subunits: alpha(3), beta(3), gamma(1), delta(1), epsilon(1). F(0) has four main subunits: a(1), b(1), b'(1) and c(10-14). The alpha and beta chains form an alternating ring which encloses part of the gamma chain. F(1) is attached to F(0) by a central stalk formed by the gamma and epsilon chains, while a peripheral stalk is formed by the delta, b and b' chains.

Its subcellular location is the plastid. It localises to the chloroplast thylakoid membrane. F(1)F(0) ATP synthase produces ATP from ADP in the presence of a proton or sodium gradient. F-type ATPases consist of two structural domains, F(1) containing the extramembraneous catalytic core and F(0) containing the membrane proton channel, linked together by a central stalk and a peripheral stalk. During catalysis, ATP synthesis in the catalytic domain of F(1) is coupled via a rotary mechanism of the central stalk subunits to proton translocation. In terms of biological role, key component of the F(0) channel; it plays a direct role in translocation across the membrane. A homomeric c-ring of between 10-14 subunits forms the central stalk rotor element with the F(1) delta and epsilon subunits. This Chlorella vulgaris (Green alga) protein is ATP synthase subunit c, chloroplastic.